The sequence spans 200 residues: Small ribosomal subunit protein uS4 (200 aa).

The interval 22–42 (TGKELEKRPYAPGPHGPNQRK) is disordered. Positions 92–152 (ARLDNLVYRM…EKSNSLVVVK (61 aa)) constitute an S4 RNA-binding domain.

Belongs to the universal ribosomal protein uS4 family. Part of the 30S ribosomal subunit. Contacts protein S5. The interaction surface between S4 and S5 is involved in control of translational fidelity.

Its function is as follows. One of the primary rRNA binding proteins, it binds directly to 16S rRNA where it nucleates assembly of the body of the 30S subunit. In terms of biological role, with S5 and S12 plays an important role in translational accuracy. In Bacillus cereus (strain B4264), this protein is Small ribosomal subunit protein uS4.